Reading from the N-terminus, the 84-residue chain is Defensin-like protein 172 (84 aa).

The signal sequence occupies residues 1–23 (MAKASSTLVLSIIFLVMFALVEQ). Disulfide bonds link Cys27–Cys74, Cys34–Cys56, Cys40–Cys68, and Cys44–Cys70.

The protein belongs to the DEFL family.

The protein localises to the secreted. This Arabidopsis thaliana (Mouse-ear cress) protein is Defensin-like protein 172 (LCR60).